The primary structure comprises 166 residues: Calmodulin-like protein 5 (166 aa).

4 consecutive EF-hand domains span residues 11–46 (EQVA…LGQT), 47–82 (PTRE…KASR), 96–131 (AADE…LGEK), and 132–166 (LTDE…LSDQ). 14 residues coordinate Ca(2+): Asp24, Asp26, Asp28, Cys30, Glu35, Asp60, Asp62, Asn64, Thr66, Glu71, Asp109, Asp111, Asp113, and Glu120. Lys131 is subject to N6,N6,N6-trimethyllysine. Ca(2+) contacts are provided by Asp145, Asp147, Asp149, Gln151, and Glu156.

This sequence belongs to the calmodulin family.

In terms of biological role, potential calcium sensor. This chain is Calmodulin-like protein 5 (CML5), found in Oryza sativa subsp. japonica (Rice).